The sequence spans 35 residues: uncharacterized protein (35 aa).

This is an uncharacterized protein from Bacillus subtilis (strain 168).